The primary structure comprises 311 residues: Oxygen-dependent coproporphyrinogen-III oxidase (311 aa).

Substrate is bound at residue S100. A divalent metal cation is bound by residues H104 and H114. The active-site Proton donor is the H114. 116-118 (NVR) contacts substrate. A divalent metal cation-binding residues include H153 and H183. The important for dimerization stretch occupies residues 248–283 (YAEFNLVYDRGTLFGLQSGGRTESILMSLPPIVHWE). 266 to 268 (GGR) provides a ligand contact to substrate.

The protein belongs to the aerobic coproporphyrinogen-III oxidase family. As to quaternary structure, homodimer. It depends on a divalent metal cation as a cofactor.

It localises to the cytoplasm. The catalysed reaction is coproporphyrinogen III + O2 + 2 H(+) = protoporphyrinogen IX + 2 CO2 + 2 H2O. Its pathway is porphyrin-containing compound metabolism; protoporphyrin-IX biosynthesis; protoporphyrinogen-IX from coproporphyrinogen-III (O2 route): step 1/1. Functionally, involved in the heme biosynthesis. Catalyzes the aerobic oxidative decarboxylation of propionate groups of rings A and B of coproporphyrinogen-III to yield the vinyl groups in protoporphyrinogen-IX. This Legionella pneumophila (strain Corby) protein is Oxygen-dependent coproporphyrinogen-III oxidase.